Reading from the N-terminus, the 348-residue chain is S-adenosylmethionine:tRNA ribosyltransferase-isomerase (348 aa).

The protein belongs to the QueA family. In terms of assembly, monomer.

It localises to the cytoplasm. The catalysed reaction is 7-aminomethyl-7-carbaguanosine(34) in tRNA + S-adenosyl-L-methionine = epoxyqueuosine(34) in tRNA + adenine + L-methionine + 2 H(+). Its pathway is tRNA modification; tRNA-queuosine biosynthesis. Its function is as follows. Transfers and isomerizes the ribose moiety from AdoMet to the 7-aminomethyl group of 7-deazaguanine (preQ1-tRNA) to give epoxyqueuosine (oQ-tRNA). The sequence is that of S-adenosylmethionine:tRNA ribosyltransferase-isomerase from Polynucleobacter necessarius subsp. necessarius (strain STIR1).